A 776-amino-acid polypeptide reads, in one-letter code: MKREMKAPTTPLESLQGDLKGKQGRTSGPARRSTKGQWTPEEDEVLCKAVERFQGKNWKKIAECFKDRTDVQCLHRWQKVLNPELVKGPWSKEEDNTIIDLVEKYGPKKWSTISQHLPGRIGKQCRERWHNHLNPGINKNAWTQEEELTLIRAHQIYGNKWAELMKFLPGRSDNSIKNHWNSSVKKKLDSYYASGLLDQCQSSPLIALQNKSIASSSSWMHSNGDEGSSRPGVDAEESECSQASTVFSQSTNDLQDEVQRGNEEYYMPEFHSGTEQQISNAASHAEPYYPSFKDVKIVVPEISCETECSKKFQNLNCSHELRTTTATEDQLPGVSNDAKQDRGLELLTHNMDNGGKNQALQQDFQSSVRLSDQPFLSNSDTDPEAQTLITDEECCRVLFPDNMKDSSTSSGEQGRNMVDPQNGKGSLCSQAAETHAHETGKVPALPWHPSSSEGLAGHNCVPLLDSDLKDSLLPRNDSNAPIQGCRLFGATELECKTDTNDGFIDTYGHVTSHGNDDNGGFPEQQGLSYIPKDSLKLVPLNSFSSPSRVNKIYFPIDDKPAEKDKGALCYEPPRFPSADIPFFSCDLVPSNSDLRQEYSPFGIRQLMISSMNCTTPLRLWDSPCHDRSPDVMLNDTAKSFSGAPSILKKRHRDLLSPVLDRRKDKKLKRAATSSLANDFSRLDVMLDEGDDCMTSRPSESPEDKNICASPSIARDNRNCASARLYQEMIPIDEEPKETLESGGVTSMQNENGCNDGGASAKNVSPSLSLHIIWYQL.

The tract at residues 1–41 is disordered; the sequence is MKREMKAPTTPLESLQGDLKGKQGRTSGPARRSTKGQWTPE. HTH myb-type domains are found at residues 30–81, 82–137, and 138–188; these read ARRS…QKVL, NPEL…NPGI, and NKNA…KKKL. DNA-binding regions (H-T-H motif) lie at residues 58-81, 110-133, and 161-184; these read WKKI…QKVL, WSTI…HNHL, and WAEL…NSSV. Disordered stretches follow at residues 217–253, 364–384, and 401–435; these read SSWM…STND, FQSS…TDPE, and DNMK…AETH. Composition is skewed to polar residues over residues 240 to 253, 364 to 380, and 423 to 432; these read CSQA…STND, FQSS…SNSD, and GKGSLCSQAA. A Nuclear localization signal motif is present at residues 648–655; the sequence is KKRHRDLL.

Component of a DREAM-like complex which modulates a variety of developmentally regulated genes and of the mitotic genes in proliferating and differentiated cells. Expressed ubiquitously at low levels. Expressed in roots, cotyledons, flowers and leaves, especially in vascular tissues.

It is found in the nucleus. Transcription factor that binds 5'-AACGG-3' motifs in gene promoters. Transcription activator involved in the regulation of cytokinesis, probably via the activation of several G2/M phase-specific genes transcription (e.g. KNOLLE). Transcription repressor that regulates organ growth. Binds to the promoters of G2/M-specific genes and to E2F target genes to prevent their expression in post-mitotic cells and to restrict the time window of their expression in proliferating cells. Required for the maintenance of diploidy. The sequence is that of Transcription factor MYB3R-1 from Arabidopsis thaliana (Mouse-ear cress).